The chain runs to 541 residues: 2-succinyl-5-enolpyruvyl-6-hydroxy-3-cyclohexene-1-carboxylate synthase (541 aa).

It belongs to the TPP enzyme family. MenD subfamily. In terms of assembly, homodimer. The cofactor is Mg(2+). It depends on Mn(2+) as a cofactor. Thiamine diphosphate serves as cofactor.

It carries out the reaction isochorismate + 2-oxoglutarate + H(+) = 5-enolpyruvoyl-6-hydroxy-2-succinyl-cyclohex-3-ene-1-carboxylate + CO2. The protein operates within quinol/quinone metabolism; 1,4-dihydroxy-2-naphthoate biosynthesis; 1,4-dihydroxy-2-naphthoate from chorismate: step 2/7. It participates in quinol/quinone metabolism; menaquinone biosynthesis. Catalyzes the thiamine diphosphate-dependent decarboxylation of 2-oxoglutarate and the subsequent addition of the resulting succinic semialdehyde-thiamine pyrophosphate anion to isochorismate to yield 2-succinyl-5-enolpyruvyl-6-hydroxy-3-cyclohexene-1-carboxylate (SEPHCHC). This is 2-succinyl-5-enolpyruvyl-6-hydroxy-3-cyclohexene-1-carboxylate synthase from Rhodococcus opacus (strain B4).